Consider the following 101-residue polypeptide: Protein Tat (101 aa).

The tract at residues 1 to 24 is interaction with human CREBBP; the sequence is MEPVDPNLEPWKHPGSQPRTACNN. The segment at 1–48 is transactivation; it reads MEPVDPNLEPWKHPGSQPRTACNNCYCKKCCFHCQVCFTKKGLGISYG. Zn(2+)-binding residues include C22, C25, and C27. The segment at 22 to 37 is cysteine-rich; that stretch reads CNNCYCKKCCFHCQVC. Position 28 is an N6-acetyllysine; by host PCAF (K28). 4 residues coordinate Zn(2+): C30, H33, C34, and C37. Residues 38–48 are core; it reads FTKKGLGISYG. The segment at 47–101 is disordered; the sequence is YGRKKRRQRRRPPQDSQTHQSSLSKQPTSQLRGDPTGPTESKKKVERETETDPVH. Basic residues predominate over residues 48–57; it reads GRKKRRQRRR. The short motif at 49–57 is the Nuclear localization signal, RNA-binding (TAR), and protein transduction element; sequence RKKRRQRRR. The interaction with the host capping enzyme RNGTT stretch occupies residues 49–86; that stretch reads RKKRRQRRRPPQDSQTHQSSLSKQPTSQLRGDPTGPTE. 2 positions are modified to N6-acetyllysine; by host EP300 and GCN5L2: K50 and K51. Asymmetric dimethylarginine; by host PRMT6 occurs at positions 52 and 53. Polar residues predominate over residues 61 to 77; sequence DSQTHQSSLSKQPTSQL. K71 is covalently cross-linked (Glycyl lysine isopeptide (Lys-Gly) (interchain with G-Cter in ubiquitin)). The short motif at 78-80 is the Cell attachment site element; that stretch reads RGD. Basic and acidic residues predominate over residues 86 to 101; the sequence is ESKKKVERETETDPVH.

This sequence belongs to the lentiviruses Tat family. As to quaternary structure, interacts with host CCNT1. Associates with the P-TEFb complex composed at least of Tat, P-TEFb (CDK9 and CCNT1), TAR RNA, RNA Pol II. Recruits the HATs CREBBP, TAF1/TFIID, EP300, PCAF and GCN5L2. Interacts with host KAT5/Tip60; this interaction targets the latter to degradation. Interacts with the host deacetylase SIRT1. Interacts with host capping enzyme RNGTT; this interaction stimulates RNGTT. Binds to host KDR, and to the host integrins ITGAV/ITGB3 and ITGA5/ITGB1. Interacts with host KPNB1/importin beta-1 without previous binding to KPNA1/importin alpha-1. Interacts with EIF2AK2. Interacts with host nucleosome assembly protein NAP1L1; this interaction may be required for the transport of Tat within the nucleus, since the two proteins interact at the nuclear rim. Interacts with host C1QBP/SF2P32; this interaction involves lysine-acetylated Tat. Interacts with the host chemokine receptors CCR2, CCR3 and CXCR4. Interacts with host DPP4/CD26; this interaction may trigger an anti-proliferative effect. Interacts with host LDLR. Interacts with the host extracellular matrix metalloproteinase MMP1. Interacts with host PRMT6; this interaction mediates Tat's methylation. Interacts with, and is ubiquitinated by MDM2/Hdm2. Interacts with host PSMC3 and HTATIP2. Interacts with STAB1; this interaction may overcome SATB1-mediated repression of IL2 and IL2RA (interleukin) in T cells by binding to the same domain than HDAC1. Interacts (when acetylated) with human CDK13, thereby increasing HIV-1 mRNA splicing and promoting the production of the doubly spliced HIV-1 protein Nef. Interacts with host TBP; this interaction modulates the activity of transcriptional pre-initiation complex. Interacts with host RELA. Interacts with host PLSCR1; this interaction negatively regulates Tat transactivation activity by altering its subcellular distribution. In terms of processing, asymmetrical arginine methylation by host PRMT6 seems to diminish the transactivation capacity of Tat and affects the interaction with host CCNT1. Post-translationally, acetylation by EP300, CREBBP, GCN5L2/GCN5 and PCAF regulates the transactivation activity of Tat. EP300-mediated acetylation of Lys-50 promotes dissociation of Tat from the TAR RNA through the competitive binding to PCAF's bromodomain. In addition, the non-acetylated Tat's N-terminus can also interact with PCAF. PCAF-mediated acetylation of Lys-28 enhances Tat's binding to CCNT1. Lys-50 is deacetylated by SIRT1. Polyubiquitination by host MDM2 does not target Tat to degradation, but activates its transactivation function and fosters interaction with CCNT1 and TAR RNA. In terms of processing, phosphorylated by EIF2AK2 on serine and threonine residues adjacent to the basic region important for TAR RNA binding and function. Phosphorylation of Tat by EIF2AK2 is dependent on the prior activation of EIF2AK2 by dsRNA.

The protein resides in the host nucleus. It localises to the host nucleolus. It is found in the host cytoplasm. The protein localises to the secreted. In terms of biological role, transcriptional activator that increases RNA Pol II processivity, thereby increasing the level of full-length viral transcripts. Recognizes a hairpin structure at the 5'-LTR of the nascent viral mRNAs referred to as the transactivation responsive RNA element (TAR) and recruits the cyclin T1-CDK9 complex (P-TEFb complex) that will in turn hyperphosphorylate the RNA polymerase II to allow efficient elongation. The CDK9 component of P-TEFb and other Tat-activated kinases hyperphosphorylate the C-terminus of RNA Pol II that becomes stabilized and much more processive. Other factors such as HTATSF1/Tat-SF1, SUPT5H/SPT5, and HTATIP2 are also important for Tat's function. Besides its effect on RNA Pol II processivity, Tat induces chromatin remodeling of proviral genes by recruiting the histone acetyltransferases (HATs) CREBBP, EP300 and PCAF to the chromatin. This also contributes to the increase in proviral transcription rate, especially when the provirus integrates in transcriptionally silent region of the host genome. To ensure maximal activation of the LTR, Tat mediates nuclear translocation of NF-kappa-B by interacting with host RELA. Through its interaction with host TBP, Tat may also modulate transcription initiation. Tat can reactivate a latently infected cell by penetrating in it and transactivating its LTR promoter. In the cytoplasm, Tat is thought to act as a translational activator of HIV-1 mRNAs. Its function is as follows. Extracellular circulating Tat can be endocytosed by surrounding uninfected cells via the binding to several surface receptors such as CD26, CXCR4, heparan sulfate proteoglycans (HSPG) or LDLR. Neurons are rarely infected, but they internalize Tat via their LDLR. Through its interaction with nuclear HATs, Tat is potentially able to control the acetylation-dependent cellular gene expression. Modulates the expression of many cellular genes involved in cell survival, proliferation or in coding for cytokines or cytokine receptors. Tat plays a role in T-cell and neurons apoptosis. Tat induced neurotoxicity and apoptosis probably contribute to neuroAIDS. Circulating Tat also acts as a chemokine-like and/or growth factor-like molecule that binds to specific receptors on the surface of the cells, affecting many cellular pathways. In the vascular system, Tat binds to ITGAV/ITGB3 and ITGA5/ITGB1 integrins dimers at the surface of endothelial cells and competes with bFGF for heparin-binding sites, leading to an excess of soluble bFGF. In Human immunodeficiency virus type 1 group M subtype B (isolate YU-2) (HIV-1), this protein is Protein Tat.